We begin with the raw amino-acid sequence, 211 residues long: Ribosomal RNA small subunit methyltransferase G (211 aa).

S-adenosyl-L-methionine is bound by residues Gly81, Leu86, Ala132–Glu133, and Arg147.

Belongs to the methyltransferase superfamily. RNA methyltransferase RsmG family.

The protein resides in the cytoplasm. The catalysed reaction is guanosine(527) in 16S rRNA + S-adenosyl-L-methionine = N(7)-methylguanosine(527) in 16S rRNA + S-adenosyl-L-homocysteine. Its function is as follows. Specifically methylates the N7 position of guanine in position 527 of 16S rRNA. The polypeptide is Ribosomal RNA small subunit methyltransferase G (Dichelobacter nodosus (strain VCS1703A)).